The chain runs to 146 residues: Catabolic 3-dehydroquinase (146 aa).

Tyr-24 serves as the catalytic Proton acceptor. Residues Asn-78, His-84, and Asp-91 each contribute to the substrate site. His-104 serves as the catalytic Proton donor. Residues Ile-105–Thr-106 and Arg-115 contribute to the substrate site.

This sequence belongs to the type-II 3-dehydroquinase family. As to quaternary structure, homododecamer. Adopts a ring-like structure, composed of an arrangement of two hexameric rings stacked on top of one another.

It carries out the reaction 3-dehydroquinate = 3-dehydroshikimate + H2O. Its pathway is aromatic compound metabolism; 3,4-dihydroxybenzoate biosynthesis; 3,4-dihydroxybenzoate from 3-dehydroquinate: step 1/2. Its function is as follows. Is involved in the catabolism of quinate. Allows the utilization of quinate as carbon source via the beta-ketoadipate pathway. This Candida albicans (strain SC5314 / ATCC MYA-2876) (Yeast) protein is Catabolic 3-dehydroquinase.